The primary structure comprises 175 residues: MGSEVCRVFLIGGRASGKSTVGRALAARLGWDFADTDAMVTRRAGCDIATLVAERGWDAFRDMESDALRDAAARERVVVATGGGMVLRAENRALLREAGVTVFLSLPVEVVAARLARNPEHGQRPSLTGKAVADEVADVMRERAPLYAEAARHVVRGDAPVACIVEDITALLAFS.

12 to 19 (GGRASGKS) is an ATP binding site.

Belongs to the shikimate kinase family.

It is found in the cytoplasm. The catalysed reaction is shikimate + ATP = 3-phosphoshikimate + ADP + H(+). It functions in the pathway metabolic intermediate biosynthesis; chorismate biosynthesis; chorismate from D-erythrose 4-phosphate and phosphoenolpyruvate: step 5/7. The protein is Shikimate kinase of Nitratidesulfovibrio vulgaris (strain ATCC 29579 / DSM 644 / CCUG 34227 / NCIMB 8303 / VKM B-1760 / Hildenborough) (Desulfovibrio vulgaris).